The sequence spans 1405 residues: ATP-dependent helicase/nuclease subunit A (1405 aa).

The region spanning 7 to 482 (REWTPDQLAA…ILLKANFRSR (476 aa)) is the UvrD-like helicase ATP-binding domain. 28 to 35 (AAAGAGKT) provides a ligand contact to ATP. The region spanning 551–914 (PEAVGAGKGG…RVMSIHRAKG (364 aa)) is the UvrD-like helicase C-terminal domain. 2 disordered regions span residues 778–797 (QEPW…KAVP) and 1132–1165 (AGKT…QDET). The span at 787 to 796 (GPGAAAGKAV) shows a compositional bias: low complexity.

It belongs to the helicase family. AddA subfamily. Heterodimer of AddA and AddB/RexB. Requires Mg(2+) as cofactor.

It carries out the reaction Couples ATP hydrolysis with the unwinding of duplex DNA by translocating in the 3'-5' direction.. The catalysed reaction is ATP + H2O = ADP + phosphate + H(+). In terms of biological role, the heterodimer acts as both an ATP-dependent DNA helicase and an ATP-dependent, dual-direction single-stranded exonuclease. Recognizes the chi site generating a DNA molecule suitable for the initiation of homologous recombination. The AddA nuclease domain is required for chi fragment generation; this subunit has the helicase and 3' -&gt; 5' nuclease activities. This is ATP-dependent helicase/nuclease subunit A from Moorella thermoacetica (strain ATCC 39073 / JCM 9320).